A 336-amino-acid polypeptide reads, in one-letter code: 3-hydroxyisobutyrate dehydrogenase, mitochondrial (336 aa).

A mitochondrion-targeting transit peptide spans 1 to 36 (MAASLRLLGAASGLRYWSRRLRPAAGSFAAVCSRSV). 40–68 (TPVGFIGLGNMGNPMAKNLMKHGYPLIIY) provides a ligand contact to NAD(+). 2 positions are modified to N6-acetyllysine; alternate: Lys-60 and Lys-76. 2 positions are modified to N6-succinyllysine; alternate: Lys-60 and Lys-76. Lys-95 bears the N6-succinyllysine mark. NAD(+)-binding positions include 103–104 (LP) and Asn-108. Lys-121 carries the N6-acetyllysine modification. Thr-134 provides a ligand contact to NAD(+). Residue Lys-141 is modified to N6-succinyllysine. Lys-145 is subject to N6-acetyllysine. Residue Lys-149 is modified to N6-acetyllysine; alternate. Lys-149 bears the N6-succinyllysine; alternate mark. Residue Lys-209 is part of the active site. N6-acetyllysine; alternate is present on residues Lys-238 and Lys-242. N6-succinyllysine; alternate occurs at positions 238 and 242. An NAD(+)-binding site is contributed by Lys-284. Position 297 is an N6-succinyllysine (Lys-297). Lys-321 carries the N6-acetyllysine; alternate modification. An N6-succinyllysine; alternate modification is found at Lys-321.

The protein belongs to the HIBADH-related family. 3-hydroxyisobutyrate dehydrogenase subfamily. Homodimer. Detected in skin fibroblasts.

The protein localises to the mitochondrion. The catalysed reaction is 3-hydroxy-2-methylpropanoate + NAD(+) = 2-methyl-3-oxopropanoate + NADH + H(+). It functions in the pathway amino-acid degradation; L-valine degradation. This Homo sapiens (Human) protein is 3-hydroxyisobutyrate dehydrogenase, mitochondrial (HIBADH).